The chain runs to 475 residues: Ribulose bisphosphate carboxylase large chain (475 aa).

Residues 1–2 (MS) constitute a propeptide that is removed on maturation. Pro3 is subject to N-acetylproline. At Lys14 the chain carries N6,N6,N6-trimethyllysine. 2 residues coordinate substrate: Asn123 and Thr173. The Proton acceptor role is filled by Lys175. Lys177 contacts substrate. Residues Lys201, Asp203, and Glu204 each coordinate Mg(2+). Lys201 carries the N6-carboxylysine modification. His294 (proton acceptor) is an active-site residue. The substrate site is built by Arg295, His327, and Ser379.

This sequence belongs to the RuBisCO large chain family. Type I subfamily. In terms of assembly, heterohexadecamer of 8 large chains and 8 small chains; disulfide-linked. The disulfide link is formed within the large subunit homodimers. The cofactor is Mg(2+). Post-translationally, the disulfide bond which can form in the large chain dimeric partners within the hexadecamer appears to be associated with oxidative stress and protein turnover.

It localises to the plastid. The protein resides in the chloroplast. The enzyme catalyses 2 (2R)-3-phosphoglycerate + 2 H(+) = D-ribulose 1,5-bisphosphate + CO2 + H2O. The catalysed reaction is D-ribulose 1,5-bisphosphate + O2 = 2-phosphoglycolate + (2R)-3-phosphoglycerate + 2 H(+). Its function is as follows. RuBisCO catalyzes two reactions: the carboxylation of D-ribulose 1,5-bisphosphate, the primary event in carbon dioxide fixation, as well as the oxidative fragmentation of the pentose substrate in the photorespiration process. Both reactions occur simultaneously and in competition at the same active site. This Spirogyra maxima (Green alga) protein is Ribulose bisphosphate carboxylase large chain.